We begin with the raw amino-acid sequence, 649 residues long: Protein PSK SIMULATOR 3 (649 aa).

Residue G2 is the site of N-myristoyl glycine attachment. Residues 18–43 (SGSSVADDGREPDFGHSQPNGQTSLI) form a disordered region.

It localises to the nucleus. Functionally, promotes plant growth, especially at the vegetative stage, probably via the regulation of phytosulfokine (PSK) signaling; PSK are peptide phytohormones acting as growth factors. Together with PSI2 and PSI3, required during vegetative growth and reproduction. May also have a function in carbohydrate metabolism. In Arabidopsis thaliana (Mouse-ear cress), this protein is Protein PSK SIMULATOR 3.